Reading from the N-terminus, the 127-residue chain is Ribosome-binding factor A (127 aa).

It belongs to the RbfA family. Monomer. Binds 30S ribosomal subunits, but not 50S ribosomal subunits or 70S ribosomes.

Its subcellular location is the cytoplasm. Functionally, one of several proteins that assist in the late maturation steps of the functional core of the 30S ribosomal subunit. Associates with free 30S ribosomal subunits (but not with 30S subunits that are part of 70S ribosomes or polysomes). Required for efficient processing of 16S rRNA. May interact with the 5'-terminal helix region of 16S rRNA. This is Ribosome-binding factor A from Geobacillus kaustophilus (strain HTA426).